The sequence spans 1532 residues: MALSSFCSSDGSDPLWDWNVTWHTSNPDFTKCFQNTVLTWVPCFYLWSCFPLYFLYLSRHDRGYIQMTHLNKAKTALGFFLWIICWADLFYSFWERSQGMLLAPVLLVSPTLLGITMLLATFLIQFERRKGVQSSGIMLTFWLVALLCALAILRSKIISALKKDAQVDMFRDSAFYLYFTLVFIQLVLSCFSDSSPLFSETVRDPNPCPESSASFLSRITFWWITGMMVQGYRQPLKSSDLWSLNKEDTSEEVVPVLVNNWKKECVKSRKQPVRIVYAPPKDPTKPKGSSQLDVNEEVEALIVKSSHKDRDPSLFKVLYKTFGPYFLMSFLYKALHDLMMFAGPEILELIINFVNDREAPDWQGYLYTALLFVSACLQTLALHQYFHICFVTGMRIKTAVVGAVYRKALVITNSARKSSTVGEIVNLMSVDAQRFMDLATYINMIWSAPLQVTLALYFLWLNLGPSVLAGVAVMILMVPFNAVMAMKTKTYQVAHMKSKDNRIKLMNEILNGIKVLKLYAWELAFQDKVMNIRQEELKVLKKSAYLAAVGTFTWVCTPFLVALSTFAVFVTVDEKNILDAKKAFVSLALFNILRFPLNILPMVISSIVQASVSLKRLRIFLSHEELEPDSIERWSIKDGGGMNSITVKNATFTWARDEPPTLNGITFAIPDGALVAVVGQVGCGKSSLLSALLAEMDKVEGHVTLKGSVAYVPQQAWIQNDSLRENILFGRPLQEHCYKAVMEACALLPDLEILPSGDLTEIGEKGVNLSGGQKQRVSLARAVYCNSDIYLLDDPLSAVDAHVGKHIFEKVVGPMGLLKNKTRILVTHGISYLPQVDVIIVMSGGKISEMGSYQELLDRDGAFAEFVRTYANTEQDLASEDDSKNGVSGLGKESKPVENGILVTDAVGKPLQRHLSNSSSHSVVTNQQHSSTAELQKSGVKEETWKLMEADKAQTGQVKLSVYWNYMKAIGLCISFLSIFLFLCNHVSALASNYWLSLWTDDRPAVNGTQENRNFRLSVYGALGILQGVAVFGYSMAVSIGGIFASRRLHLDLLQNVLRSPMSFFERTPSGNLVNRFSKELDTVDSMIPQVIKMFMGSLFSVIGAVIIILLATPIAAVIIPPLGLVYFFVQRFYVASSRQLKRLESVSRSPVYSHFNETLLGVSVIRAFEEQERFIRQSDLKVDENQKAYYPSIVANRWLAVRLECVGNCIVLFAALFAVISRHSLSAGLVGLSVSYSLQITAYLNWLVRMSSEMETNIVAVERLKEYSETEKEASWQIQETAPPSTWPHSGRVEFRDYCLRYREDLDLVLKHINVTIEGGEKVGIVGRTGAGKSSLTLGLFRINESAEGEIIIDGINIAKIGLHNLRFKITIIPQDPVLFSGSLRMNLDPFSQYSDEEVWMALELAHLKGFVSALPDKLNHECAEGGENLSVGQRQLVCLARALLRKTKILVLDEATAAVDLETDDLIQSTIRTQFEDSTVLTIAHRLNTIMDYTRVIVLDKGEIRECGAPSELLQQRGVFYSMAKDAGLV.

Residues 1–33 lie on the Extracellular side of the membrane; the sequence is MALSSFCSSDGSDPLWDWNVTWHTSNPDFTKCF. N-linked (GlcNAc...) asparagine glycosylation occurs at Asn19. A helical membrane pass occupies residues 34–54; the sequence is QNTVLTWVPCFYLWSCFPLYF. Topologically, residues 55–74 are cytoplasmic; it reads LYLSRHDRGYIQMTHLNKAK. The chain crosses the membrane as a helical span at residues 75–95; that stretch reads TALGFFLWIICWADLFYSFWE. At 96–100 the chain is on the extracellular side; that stretch reads RSQGM. A helical membrane pass occupies residues 101–121; the sequence is LLAPVLLVSPTLLGITMLLAT. Residues 122 to 133 lie on the Cytoplasmic side of the membrane; the sequence is FLIQFERRKGVQ. The helical transmembrane segment at 134-154 threads the bilayer; sequence SSGIMLTFWLVALLCALAILR. Over 155-172 the chain is Extracellular; that stretch reads SKIISALKKDAQVDMFRD. A helical transmembrane segment spans residues 173–193; the sequence is SAFYLYFTLVFIQLVLSCFSD. Over 194 to 317 the chain is Cytoplasmic; that stretch reads SSPLFSETVR…KDRDPSLFKV (124 aa). Tyr277 is modified (phosphotyrosine). Ser290 is modified (phosphoserine). A helical transmembrane segment spans residues 318 to 338; that stretch reads LYKTFGPYFLMSFLYKALHDL. One can recognise an ABC transmembrane type-1 1 domain in the interval 326 to 609; the sequence is FLMSFLYKAL…LPMVISSIVQ (284 aa). The Extracellular portion of the chain corresponds to 339–364; that stretch reads MMFAGPEILELIINFVNDREAPDWQG. The helical transmembrane segment at 365–385 threads the bilayer; that stretch reads YLYTALLFVSACLQTLALHQY. The Cytoplasmic portion of the chain corresponds to 386-441; sequence FHICFVTGMRIKTAVVGAVYRKALVITNSARKSSTVGEIVNLMSVDAQRFMDLATY. A helical membrane pass occupies residues 442 to 462; it reads INMIWSAPLQVTLALYFLWLN. Over 463 to 465 the chain is Extracellular; sequence LGP. Residues 466–486 form a helical membrane-spanning segment; it reads SVLAGVAVMILMVPFNAVMAM. Over 487–548 the chain is Cytoplasmic; it reads KTKTYQVAHM…VLKKSAYLAA (62 aa). Lys504 bears the N6-succinyllysine mark. Residues 549-569 traverse the membrane as a helical segment; that stretch reads VGTFTWVCTPFLVALSTFAVF. At 570–591 the chain is on the extracellular side; sequence VTVDEKNILDAKKAFVSLALFN. A helical membrane pass occupies residues 592-612; that stretch reads ILRFPLNILPMVISSIVQASV. Residues 613-967 lie on the Cytoplasmic side of the membrane; it reads SLKRLRIFLS…VKLSVYWNYM (355 aa). One can recognise an ABC transporter 1 domain in the interval 645-869; the sequence is ITVKNATFTW…DGAFAEFVRT (225 aa). Residue 679–686 participates in ATP binding; the sequence is GQVGCGKS. Phosphoserine occurs at positions 879, 883, 916, and 931. The helical transmembrane segment at 968 to 988 threads the bilayer; that stretch reads KAIGLCISFLSIFLFLCNHVS. Residues 975–1257 form the ABC transmembrane type-1 2 domain; sequence SFLSIFLFLC…LVRMSSEMET (283 aa). At 989–1026 the chain is on the extracellular side; it reads ALASNYWLSLWTDDRPAVNGTQENRNFRLSVYGALGIL. The chain crosses the membrane as a helical span at residues 1027–1047; sequence QGVAVFGYSMAVSIGGIFASR. Residues 1048 to 1090 lie on the Cytoplasmic side of the membrane; sequence RLHLDLLQNVLRSPMSFFERTPSGNLVNRFSKELDTVDSMIPQ. A helical membrane pass occupies residues 1091 to 1111; it reads VIKMFMGSLFSVIGAVIIILL. Residue Ala1112 is a topological domain, extracellular. Residues 1113–1133 form a helical membrane-spanning segment; that stretch reads TPIAAVIIPPLGLVYFFVQRF. The Cytoplasmic segment spans residues 1134 to 1204; it reads YVASSRQLKR…VANRWLAVRL (71 aa). The helical transmembrane segment at 1205 to 1225 threads the bilayer; the sequence is ECVGNCIVLFAALFAVISRHS. Topologically, residues 1226–1227 are extracellular; that stretch reads LS. A helical membrane pass occupies residues 1228 to 1248; the sequence is AGLVGLSVSYSLQITAYLNWL. Residues 1249–1532 lie on the Cytoplasmic side of the membrane; sequence VRMSSEMETN…YSMAKDAGLV (284 aa). One can recognise an ABC transporter 2 domain in the interval 1294-1528; the sequence is VEFRDYCLRY…RGVFYSMAKD (235 aa). Residue 1328-1335 coordinates ATP; it reads GRTGAGKS.

It belongs to the ABC transporter superfamily. ABCC family. Conjugate transporter (TC 3.A.1.208) subfamily. Post-translationally, glycosylated. Skeletal muscle, brain, heart, spleen, lung and kidney.

It is found in the cell membrane. The protein localises to the basolateral cell membrane. It carries out the reaction ATP + H2O + xenobioticSide 1 = ADP + phosphate + xenobioticSide 2.. The enzyme catalyses an S-substituted glutathione(in) + ATP + H2O = an S-substituted glutathione(out) + ADP + phosphate + H(+). It catalyses the reaction sphing-4-enine 1-phosphate(in) + ATP + H2O = sphing-4-enine 1-phosphate(out) + ADP + phosphate + H(+). The catalysed reaction is leukotriene C4(in) + ATP + H2O = leukotriene C4(out) + ADP + phosphate + H(+). It carries out the reaction 17beta-estradiol 17-O-(beta-D-glucuronate)(in) + ATP + H2O = 17beta-estradiol 17-O-(beta-D-glucuronate)(out) + ADP + phosphate + H(+). The enzyme catalyses daunorubicin(in) + ATP + H2O = daunorubicin(out) + ADP + phosphate + H(+). It catalyses the reaction vincristine(in) + ATP + H2O = vincristine(out) + ADP + phosphate + H(+). The catalysed reaction is 2',3'-cGAMP(in) + ATP + H2O = 2',3'-cGAMP(out) + ADP + phosphate + H(+). It carries out the reaction S-[(2E,6E,10E)-geranylgeranyl]-L-glutathione(in) + ATP + H2O = S-[(2E,6E,10E)-geranylgeranyl]-L-glutathione(out) + ADP + phosphate + H(+). The enzyme catalyses prostaglandin A2-S-(R)-glutathione(in) + ATP + H2O = prostaglandin A2-S-(R)-glutathione(out) + ADP + phosphate + H(+). It catalyses the reaction prostaglandin A2-S-(S)-glutathione(in) + ATP + H2O = prostaglandin A2-S-(S)-glutathione(out) + ADP + phosphate + H(+). Its activity is regulated as follows. MK 571 inhibits sphingosine 1-phosphate and leukotriene C4 export. In terms of biological role, mediates export of organic anions and drugs from the cytoplasm. Mediates ATP-dependent transport of glutathione and glutathione conjugates, leukotriene C4, estradiol-17-beta-o-glucuronide, methotrexate, antiviral drugs and other xenobiotics. Confers resistance to anticancer drugs by decreasing accumulation of drug in cells, and by mediating ATP- and GSH-dependent drug export. Hydrolyzes ATP with low efficiency. Catalyzes the export of sphingosine 1-phosphate from mast cells independently of their degranulation. Participates in inflammatory response by allowing export of leukotriene C4 from leukotriene C4-synthesizing cells. Exports S-geranylgeranyl-glutathione (GGG) in lymphoid cells and stromal compartments of lymphoid organs. ABCC1 (via extracellular transport) with GGT5 (via GGG catabolism) establish GGG gradients within lymphoid tissues to position P2RY8-positive lymphocytes at germinal centers in lymphoid follicles and restrict their chemotactic transmigration from blood vessels to the bone marrow parenchyma. Mediates basolateral export of GSH-conjugated R- and S-prostaglandin A2 diastereomers in polarized epithelial cells. The polypeptide is Multidrug resistance-associated protein 1 (Rattus norvegicus (Rat)).